The primary structure comprises 192 residues: Xanthine phosphoribosyltransferase (192 aa).

Xanthine-binding residues include Leu-20 and Asn-27. Residue 128-132 (AHGEA) coordinates 5-phospho-alpha-D-ribose 1-diphosphate. Lys-156 contributes to the xanthine binding site.

The protein belongs to the purine/pyrimidine phosphoribosyltransferase family. Xpt subfamily. As to quaternary structure, homodimer.

It is found in the cytoplasm. The enzyme catalyses XMP + diphosphate = xanthine + 5-phospho-alpha-D-ribose 1-diphosphate. It participates in purine metabolism; XMP biosynthesis via salvage pathway; XMP from xanthine: step 1/1. In terms of biological role, converts the preformed base xanthine, a product of nucleic acid breakdown, to xanthosine 5'-monophosphate (XMP), so it can be reused for RNA or DNA synthesis. This chain is Xanthine phosphoribosyltransferase, found in Lactobacillus gasseri (strain ATCC 33323 / DSM 20243 / BCRC 14619 / CIP 102991 / JCM 1131 / KCTC 3163 / NCIMB 11718 / NCTC 13722 / AM63).